A 179-amino-acid polypeptide reads, in one-letter code: Putative BPIFA4P protein (179 aa).

Residues 1-20 (MLNVSGLFVLLCGLLVSSSA) form the signal peptide.

The protein belongs to the BPI/LBP/Plunc superfamily. Plunc family. As to expression, expressed in breast cancer and salivary gland.

The protein resides in the secreted. Major protein in sweat, has surfactant properties. This chain is Putative BPIFA4P protein (BPIFA4P), found in Homo sapiens (Human).